A 318-amino-acid polypeptide reads, in one-letter code: MPMTNLLLLIVPILIAMAFLMLTERKILGYMQLRKGPNIVGPYGLLQPFADAMKLFTKEPLKPSTSTITLYITAPTLALTIALLLWTPLPMPNPLVNLNLGLLFILATSSLAVYSILWSGWASNSNYALIGALRAVAQTISYEVTLAIILLSTLLMSGSFNLSTLVTTQEHLWLILPTWPLAMMWFISTLAETNRTPFDLTEGESELVSGFNIEYAAGPFALFFMAEYMNIIMMNTLTATIFLGATYNTHSPELYTTYFVTKALLLTSLFLWIRTAYPRFRYDQLMHLLWKNFLPLTLASLMWYISMPTTISSIPPQT.

The next 8 membrane-spanning stretches (helical) occupy residues Pro-2–Leu-22, Ile-68–Pro-88, Leu-100–Gly-120, Leu-146–Val-166, His-171–Ala-191, Ile-213–Met-233, Glu-253–Ile-273, and Leu-285–Ile-305.

This sequence belongs to the complex I subunit 1 family. Core subunit of respiratory chain NADH dehydrogenase (Complex I) which is composed of 45 different subunits.

Its subcellular location is the mitochondrion inner membrane. The enzyme catalyses a ubiquinone + NADH + 5 H(+)(in) = a ubiquinol + NAD(+) + 4 H(+)(out). In terms of biological role, core subunit of the mitochondrial membrane respiratory chain NADH dehydrogenase (Complex I) which catalyzes electron transfer from NADH through the respiratory chain, using ubiquinone as an electron acceptor. Essential for the catalytic activity and assembly of complex I. This is NADH-ubiquinone oxidoreductase chain 1 (MT-ND1) from Pan troglodytes (Chimpanzee).